We begin with the raw amino-acid sequence, 674 residues long: Inactivation-no-after-potential D protein (674 aa).

The region spanning 17–106 is the PDZ 1 domain; sequence MVTLDKTGKK…KIELEIQTFD (90 aa). Residues 133–192 form a disordered region; the sequence is QTTNNNASGGQGMGQGQGQGQGMAGMNRQQSMQKRNTTFTASMRQKHSNYADEDDEDTRD. Over residues 141 to 155 the composition is skewed to gly residues; it reads GGQGMGQGQGQGQGM. Residues 159–175 are compositionally biased toward polar residues; that stretch reads NRQQSMQKRNTTFTASM. 2 consecutive PDZ domains span residues 249–332 and 364–448; these read RIEV…TSRR and ARTV…LTLK. Over residues 458 to 475 the composition is skewed to basic and acidic residues; that stretch reads AAEEKKKEEAKKEEEKPQ. Residues 458–481 are disordered; it reads AAEEKKKEEAKKEEEKPQEPATAE. PDZ domains follow at residues 489 to 577 and 584 to 664; these read LIEL…RADP and NVDL…TRPK. Phosphoserine occurs at positions 598 and 600.

As to quaternary structure, interacts with the C-terminus of trp, and with norpA and inaC to form the inaD signaling complex. Interacts with Fkbp59, which together with trpl, rhodopsin and calmodulin may also be part of the inaD complex. Phosphorylated by inaC. In terms of tissue distribution, expressed in photoreceptor cells (R cells) of the compound eyes and ocelli.

The protein resides in the cell projection. Its subcellular location is the rhabdomere. In terms of biological role, involved in the negative feedback regulation of the light-activated signaling cascade in photoreceptors through a calcium-mediated process. Interacts with tetrapeptide ligand located in C-terminal sequence of 3 key components of the visual cascade, tethering them and forming a macromolecular signaling phototransduction complex. The chain is Inactivation-no-after-potential D protein (inaD) from Drosophila melanogaster (Fruit fly).